The chain runs to 89 residues: Small ribosomal subunit protein uS14 (89 aa).

Belongs to the universal ribosomal protein uS14 family. In terms of assembly, part of the 30S ribosomal subunit. Contacts proteins S3 and S10.

Its function is as follows. Binds 16S rRNA, required for the assembly of 30S particles and may also be responsible for determining the conformation of the 16S rRNA at the A site. The polypeptide is Small ribosomal subunit protein uS14 (Onion yellows phytoplasma (strain OY-M)).